Reading from the N-terminus, the 189-residue chain is Interferon alpha-D (189 aa).

The N-terminal stretch at 1-23 is a signal peptide; the sequence is MAPAWSLLLALLLLSCNAICSLG. Intrachain disulfides connect Cys24-Cys122 and Cys52-Cys162.

It belongs to the alpha/beta interferon family.

Its subcellular location is the secreted. Produced by macrophages, IFN-alpha have antiviral activities. Interferon stimulates the production of two enzymes: a protein kinase and an oligoadenylate synthetase. The chain is Interferon alpha-D (IFNAD) from Bos taurus (Bovine).